A 756-amino-acid chain; its full sequence is MASNGAYPVLGPGVTVNPGTSLSVFTALPFATPAPGPAHRPPLVTAVVPPAGPLVLSAFPSTPLVAGQDGRGPSGAGASNVFVQMRTEVGPVKPPQAQTLILTQAPLVWQAPGTLCGGVMCPPPLLLAAAPGVPVTSAQVVGGTQACEGGWSHGLPLPPPPPAAQVAPIVSPGNARPWPQGAHGEGSLAPSQAKARPDDSCKPKSVYENFRLWQHYKPLARRHLPQSPDTEALSCFLIPVLRSLARRKPTMTLEEGLWQAMREWQHTSNFDRMIFYEMAEKFLEFEAEEEMQIQKSQWMKGPQSLPPPAPPRLEPRGPPAPEVVKQPVYLPSKDGPKAPTACLPPPRPQRPAETKAHLPPPRPQRPAETNAHLPPPRPQRPAETKVPEEIPPEVVQEYVDIMEELLGSHPGDTGEPEGQREKGKVEQPQEEDGITSDPGLLSYIDKLCSQEDFVTKVEAVIHPRFLEELLSPDPQMDFLALSQELEQEEGLTLAQLVEKRLLSLKEKGCGRAAPRHGTARLDSSPSEFAAGQEAAREVPDPQQRVSVETSPPQTAAQDPQGQGRVRTGMARSEDPAVLLGCQDSPRLKAVRPTSPPQDHRPTCPGLGTKDALGLPGESPVKESHGLAKGSSEETELPGMVYVVGSHHRLRPWRLSQSPVPSSGLLSPGGRGPQGALQSPSAQKRGLSPSPSPASKSKKRPLFGSPSPAEKTPHPGPGLRVSGEQSLAWGLGGPSQSQKRKGDPLASRRKKKRHCSQ.

4 disordered regions span residues 173–200 (GNAR…PDDS), 293–438 (IQKS…TSDP), 511–639 (RAAP…LPGM), and 653–756 (RLSQ…HCSQ). The segment covering 304–321 (SLPPPAPPRLEPRGPPAP) has biased composition (pro residues). Basic and acidic residues predominate over residues 417–427 (EGQREKGKVEQ). A compositionally biased stretch (polar residues) spans 543-560 (QRVSVETSPPQTAAQDPQ). Residues 654–665 (LSQSPVPSSGLL) are compositionally biased toward low complexity. The segment covering 746 to 756 (SRRKKKRHCSQ) has biased composition (basic residues).

It belongs to the NUT family.

This is NUT family member 2F (NUTM2F) from Homo sapiens (Human).